The chain runs to 376 residues: uncharacterized protein (376 aa).

Belongs to the mimivirus R1 family.

This is an uncharacterized protein from Acanthamoeba polyphaga mimivirus (APMV).